We begin with the raw amino-acid sequence, 360 residues long: UDP-3-O-acylglucosamine N-acyltransferase (360 aa).

The Proton acceptor role is filled by histidine 256. A disordered region spans residues 341–360; it reads EGSGAETAARPDDDRDEGRG. Over residues 349-360 the composition is skewed to basic and acidic residues; that stretch reads ARPDDDRDEGRG.

This sequence belongs to the transferase hexapeptide repeat family. LpxD subfamily. As to quaternary structure, homotrimer.

The catalysed reaction is a UDP-3-O-[(3R)-3-hydroxyacyl]-alpha-D-glucosamine + a (3R)-hydroxyacyl-[ACP] = a UDP-2-N,3-O-bis[(3R)-3-hydroxyacyl]-alpha-D-glucosamine + holo-[ACP] + H(+). Its pathway is bacterial outer membrane biogenesis; LPS lipid A biosynthesis. Its function is as follows. Catalyzes the N-acylation of UDP-3-O-acylglucosamine using 3-hydroxyacyl-ACP as the acyl donor. Is involved in the biosynthesis of lipid A, a phosphorylated glycolipid that anchors the lipopolysaccharide to the outer membrane of the cell. The protein is UDP-3-O-acylglucosamine N-acyltransferase of Rhodopseudomonas palustris (strain TIE-1).